The primary structure comprises 32 residues: Chlorophyll a-b binding protein 2, chloroplastic (32 aa).

The chlorophyll a site is built by Glu19 and His22. Chlorophyll b is bound at residue Arg24.

It belongs to the light-harvesting chlorophyll a/b-binding (LHC) protein family. The LHC complex consists of chlorophyll a-b binding proteins. Binds at least 14 chlorophylls (8 Chl-a and 6 Chl-b) and carotenoids such as lutein and neoxanthin. is required as a cofactor. Photoregulated by reversible phosphorylation of its threonine residues.

The protein localises to the plastid. It is found in the chloroplast thylakoid membrane. In terms of biological role, the light-harvesting complex (LHC) functions as a light receptor, it captures and delivers excitation energy to photosystems with which it is closely associated. This is Chlorophyll a-b binding protein 2, chloroplastic from Populus euphratica (Euphrates poplar).